The primary structure comprises 480 residues: Uridine 5'-monophosphate synthase (480 aa).

Ala2 is modified (N-acetylalanine). The segment at 2-214 (AAADALLGSL…AFVAANPNDS (213 aa)) is OPRTase. Tyr37 is modified (phosphotyrosine). A Phosphoserine modification is found at Ser214. The segment at 215-220 (LPSVKK) is domain linker. An OMPdecase region spans residues 221–480 (EPKELSFGAR…WEAYLSRLAV (260 aa)). Orotidine 5'-phosphate is bound at residue Ser257. UMP contacts are provided by residues Ser257, Asp259, and 281 to 283 (KIH). Orotidine 5'-phosphate is bound by residues Lys281, Lys314, Asp317, Thr321, Ser372, 430–432 (QQY), and 450–451 (GR). Active-site for OMPdecase activity residues include Lys314 and Asp317. UMP is bound by residues Asp317, Thr321, Ser372, 430-432 (QQY), and 450-451 (GR).

This sequence in the N-terminal section; belongs to the purine/pyrimidine phosphoribosyltransferase family. It in the C-terminal section; belongs to the OMP decarboxylase family. As to quaternary structure, homodimer; dimerization is required for enzymatic activity.

It carries out the reaction orotidine 5'-phosphate + diphosphate = orotate + 5-phospho-alpha-D-ribose 1-diphosphate. It catalyses the reaction orotidine 5'-phosphate + H(+) = UMP + CO2. It functions in the pathway pyrimidine metabolism; UMP biosynthesis via de novo pathway; UMP from orotate: step 1/2. Its pathway is pyrimidine metabolism; UMP biosynthesis via de novo pathway; UMP from orotate: step 2/2. Bifunctional enzyme catalyzing the last two steps of de novo pyrimidine biosynthesis, orotate phosphoribosyltransferase (OPRT), which converts orotate to orotidine-5'-monophosphate (OMP), and orotidine-5'-monophosphate decarboxylase (ODC), the terminal enzymatic reaction that decarboxylates OMP to uridine monophosphate (UMP). This Bos taurus (Bovine) protein is Uridine 5'-monophosphate synthase (UMPS).